Consider the following 651-residue polypeptide: Probable Xaa-Pro aminopeptidase P (651 aa).

Residues aspartate 448, aspartate 459, glutamate 557, and glutamate 571 each contribute to the Mn(2+) site.

The protein belongs to the peptidase M24B family. Mn(2+) is required as a cofactor.

It carries out the reaction Release of any N-terminal amino acid, including proline, that is linked to proline, even from a dipeptide or tripeptide.. In terms of biological role, catalyzes the removal of a penultimate prolyl residue from the N-termini of peptides. The polypeptide is Probable Xaa-Pro aminopeptidase P (AMPP) (Coccidioides posadasii (strain C735) (Valley fever fungus)).